The chain runs to 452 residues: Phosphoglucosamine mutase (452 aa).

Serine 108 (phosphoserine intermediate) is an active-site residue. Serine 108, aspartate 247, aspartate 249, and aspartate 251 together coordinate Mg(2+). The residue at position 108 (serine 108) is a Phosphoserine.

This sequence belongs to the phosphohexose mutase family. It depends on Mg(2+) as a cofactor. Post-translationally, activated by phosphorylation.

The catalysed reaction is alpha-D-glucosamine 1-phosphate = D-glucosamine 6-phosphate. Functionally, catalyzes the conversion of glucosamine-6-phosphate to glucosamine-1-phosphate. In Paraburkholderia phymatum (strain DSM 17167 / CIP 108236 / LMG 21445 / STM815) (Burkholderia phymatum), this protein is Phosphoglucosamine mutase.